Here is a 475-residue protein sequence, read N- to C-terminus: MADVTNGERCASPQELFSSIAAQGELVKSLKARKAPKEEIDSAVKMLLSLKTSYKEAMGEDYKADCPPGNSTPDSHGDPEAVDDKEDFVDPWTVRTSSAKGIDYDKLIVQFGSSKIDKELVNRIERATGQRPHRFLRRGIFFSHRDMNQVLDAYENKKPFYLYTGRGPSSEAMHVGHLIPFIFTKWLQDVFDVPLVVQMSDDEKYLWKDLTLEQVYGYTLENAKDIIACGFDVNKTFIFSDLDYMGMSPGFYKNVVKIQKHVTFNQVKGIFGFTDSDCIGKISFPAIQAAPSFSNSFPQIFHGQADIQCLIPCAIDQDPYFRMTRDVAPRIGYPKPALLHSTFFPALQGAQTKMSASDPNSSIFLTDTAKQIKTKVNKHAFSGGRDTIEEHRQFGGNCDVDVSFMYLTFFLEDDDKLEQIRKDYSSGAMLTGELKKELIDVLQPLVAEHQARRKEVTDEMVKEFMTPRQLCFHYQ.

Positions 12–68 (SPQELFSSIAAQGELVKSLKARKAPKEEIDSAVKMLLSLKTSYKEAMGEDYKADCPP) constitute a WHEP-TRS domain. Positions 61–87 (DYKADCPPGNSTPDSHGDPEAVDDKED) are disordered. At Lys158 the chain carries N6-succinyllysine. The short motif at 168-177 (PSSEAMHVGH) is the 'HIGH' region element. The 'KMSKS' region motif lies at 353-357 (KMSAS). Ser355 carries the post-translational modification Phosphoserine.

Belongs to the class-I aminoacyl-tRNA synthetase family. In terms of assembly, homodimer. Interacts with oxidized form of GAPDH. Post-translationally, proteolytic cleavage generates 2 forms; T1-TrpRS and T2-TrpRS.

Its subcellular location is the cytoplasm. It catalyses the reaction tRNA(Trp) + L-tryptophan + ATP = L-tryptophyl-tRNA(Trp) + AMP + diphosphate + H(+). In terms of biological role, catalyzes the attachment of tryptophan to tRNA(Trp) in a two-step reaction: tryptophan is first activated by ATP to form Trp-AMP and then transferred to the acceptor end of the tRNA(Trp). Could also possess an angiostatic activity. This chain is Tryptophan--tRNA ligase, cytoplasmic (WARS1), found in Oryctolagus cuniculus (Rabbit).